Consider the following 136-residue polypeptide: NADH-ubiquinone oxidoreductase chain 2 (136 aa).

4 helical membrane passes run 12–32 (YFLIQSVASVIFLASILNQSF), 34–54 (FLIPFALLIKIGAAPFHMWLV), 74–94 (IGPLLGLAMLSSVSHLSWLMV), and 99–119 (FLLMLVYYVTYLAILYFAVIL).

It belongs to the complex I subunit 2 family.

The protein localises to the mitochondrion inner membrane. It catalyses the reaction a ubiquinone + NADH + 5 H(+)(in) = a ubiquinol + NAD(+) + 4 H(+)(out). Functionally, core subunit of the mitochondrial membrane respiratory chain NADH dehydrogenase (Complex I) that is believed to belong to the minimal assembly required for catalysis. Complex I functions in the transfer of electrons from NADH to the respiratory chain. The immediate electron acceptor for the enzyme is believed to be ubiquinone. This is NADH-ubiquinone oxidoreductase chain 2 (ND2) from Artemia salina (Brine shrimp).